The chain runs to 284 residues: Extracellular metalloprotease VDBG_01143 (284 aa).

A signal peptide spans 1–18 (MLFKSLFVAAATAVGVSG). Residue N58 is glycosylated (N-linked (GlcNAc...) asparagine). H200 is a Zn(2+) binding site. E201 is a catalytic residue. H204 is a Zn(2+) binding site. Cysteines 236 and 263 form a disulfide.

Belongs to the peptidase M43B family.

The protein localises to the secreted. Functionally, secreted metalloproteinase that allows assimilation of proteinaceous substrates. This Verticillium alfalfae (strain VaMs.102 / ATCC MYA-4576 / FGSC 10136) (Verticillium wilt of alfalfa) protein is Extracellular metalloprotease VDBG_01143.